A 216-amino-acid polypeptide reads, in one-letter code: Adenylate kinase (216 aa).

An ATP-binding site is contributed by 10–15 (GSGKGT). Residues 30–59 (STGEILRKEIKKNKKTKKYIKKTINKGKLI) form an NMP region. Residues T31, R36, 57–59 (KLI), 85–88 (GFPR), and Q92 contribute to the AMP site. Positions 121–158 (GRLIHASSGRTYHKIFNPPKIKNKDDITQEKLCSRNDD) are LID. ATP is bound by residues R122 and 131–132 (TY). AMP-binding residues include R155 and R166. Residue Q196 coordinates ATP.

This sequence belongs to the adenylate kinase family. In terms of assembly, monomer.

The protein resides in the cytoplasm. It carries out the reaction AMP + ATP = 2 ADP. It functions in the pathway purine metabolism; AMP biosynthesis via salvage pathway; AMP from ADP: step 1/1. Catalyzes the reversible transfer of the terminal phosphate group between ATP and AMP. Plays an important role in cellular energy homeostasis and in adenine nucleotide metabolism. The protein is Adenylate kinase of Buchnera aphidicola subsp. Cinara cedri (strain Cc).